The sequence spans 248 residues: Probable transcriptional regulatory protein Pcar_2335 (248 aa).

The protein belongs to the TACO1 family.

Its subcellular location is the cytoplasm. The sequence is that of Probable transcriptional regulatory protein Pcar_2335 from Syntrophotalea carbinolica (strain DSM 2380 / NBRC 103641 / GraBd1) (Pelobacter carbinolicus).